The chain runs to 221 residues: Molybdenum cofactor guanylyltransferase (221 aa).

GTP contacts are provided by residues 18-20 (IAG), Lys-35, Asn-63, Asp-81, and Asp-112. Asp-112 contacts Mg(2+).

It belongs to the MobA family. Monomer. Mg(2+) is required as a cofactor.

It localises to the cytoplasm. The enzyme catalyses Mo-molybdopterin + GTP + H(+) = Mo-molybdopterin guanine dinucleotide + diphosphate. Its function is as follows. Transfers a GMP moiety from GTP to Mo-molybdopterin (Mo-MPT) cofactor (Moco or molybdenum cofactor) to form Mo-molybdopterin guanine dinucleotide (Mo-MGD) cofactor. This is Molybdenum cofactor guanylyltransferase from Brucella abortus (strain S19).